The chain runs to 3010 residues: MSTNPKPQRKTKRNTNRRPQDVKFPGGGQIVGGVYLLPRRGPRLGVRATRKTSERSQPRGRRQPIPKARQPEGRAWAQPGYPWPLYGNEGMGWAGWLLSPRGSRPSWGPTDPRRRSRNLGKVIDTLTCGFADLMGYIPLVGAPLGGVARALAHGVRVVEDGVNYATGNLPGCSFSIFLLALLSCLTIPASAYEVRNVSGIYHVTNDCSNSSIVYEAADMIMHTPGCVPCVREGNSSRCWVALTPTLAARNASVPTTAIRRHVDLLVGAAAFCSAMYVGDLCGSVFLVSQLFTFSPRRHETIQDCNCSIYPGHVSGHRMAWDMMMNWSPTTALVVSQLLRIPQAIVDMVAGAHWGVLAGLAYYSMVGNWAKVLIVMLLFAGVDGETRVTGGQIARNAYSLTTLFSSGSAQNIQLINTNGSWHINRTALNCNDSLNTGFLAALFYTHKFNASGCPERLASCRPIDKFDQGWGPITYAEQGGQDQRPYCWHYAPKPCGIVSASKVCGPVYCFTPSPVVVGTTDRFGVPTYSWGENETDVLLLNNTRPPQGNWFGCTWMNGTGFTKTCGGPPCNIGGGGNNTLTCPTDCFRKHPAATYTKCGSGPWLTPRCLVDYPYRLWHYPCTANFTIFKVRMYVGGVEHRLDAACNWTRGERCNLEDRDRLELSPLLLSTTEWQVLPCSFTTLPALSTGLIHLHQNIVDVQYLYGIGSAVVSFAIKWDYIVILFLLLADARVCACLWMMLLIAQAEAALENLVVLNAASVAGAHGILSFLVFFCAAWYIKGKLVPGAAYAFYGVWPLLLLLLALPPRAYAMEREMAASCGGAVFVGLVLLTLSPYYKEFLARLIWWLQYFITRAEAHLQVWIPPLNIRGGRDAIILLACVVHPELIFDITKLLLAILGPLMVLQASITQVPYFVRAQGLIRACMLVRKVAGGHYVQMAFVKLTALTGTYVYDHLTPLRDWAHAGLRDLAVAVEPVVFSDMETKVITWGADTAACGDIILGLPVSARRGREILLGPADSLEGQGWRLLAPITAYSQQTRGLLGCIITSLTGRDKNQVEGEVQVVSTATQSFLATCVNGACWTVFHGAGSKTLAGPKGPITQMYTNVDLDLVGWQAPPGSRSLTPCTCGSSDLYLVTRHADVIPVRRRGDSRGSLLSPRPVSYLKGSSGGPLLCPSRHAVGIFRAAVCTRGVAKAVDFIPVESMETTMRSPVFTDNSSPPAVPQTFQVAHLHAPTGSGKSTKVPAAYAAQGYKVLVLNPSVAATLGFGAYMSKAHGIDPNIRTGVRAITTGAPITYSTYGKFLADGGCSGGAYDIIICDECHSTDSTTILGIGTVLDQAETAGARLVVLATATPPGSVTVPHPNIEEVALSNAGEIPFYGKAIPIEVIKGGRHLIFCHSKKKYDELAAKLSALGLNAVAYYRGLDVSVIPTNGDVVVVATDALMTGFTGDFDSVIDCNTCVTQTVDFSLDPTFTIETTTVPQDAVARSQRRGRTGRGRRGIYRFVTPGERPSGMFDSSVLCECYDAGCAWYELTPAETSVRLRAYLNTPGLPVCQDHLEFWESVSTGLTHIDAHFLSQTKQAGDNFPYLVAYQATVCARAQAPPPSWDQMWKCLIRLKPTLHGPTPLLYRLGAVQNEITLTHPMTKFIMACMSADLEVVTSTWVLVGGVLAALAAYCLTTGSVVIVGRIILSGRPAVIPDREVLYREFDEMEECASHLPYIEQGMQLAEQFKQKALGLLQTATKQAEAAAPVVESKWRALETFWAKHMWNFISGIQYLAGLSTLPGNPAIASLMAFTASITSPLSTQNTLLFNIWGGWVAAQLAPPSAASAFVGAGIAGAAVGSIGLGKVLVDILAGYGAGVAGALVAFKIMSGEVPSTEDLVNLLPAILSPGALVVGVVCAAILRRHVGPGEGAVQWMNRLIAFASRGNHVSPAHYVPESDAAARVTQILSGLTITQLLKRLHHWINEDCSTPCSGSWLRDVWDWICTVLTDFKTWLQSKLLPRLPGVPFFSCQRGYKGVWRGDGIMQTTCPCGAQITGHVKNGSMRIVGPKTCSSTWHGTFPINAYTTGPCAPSPAPNYSRALWRVAAEEYVEVTRVGDFHYVTGMTTDNVKCPCQVPAPEFFTEVDGVRLHRYAPACKPLLREEVTFQVGLNQYLVGSQLPCEPEPDVAVLTSMLTDPSHITAETAKRRLARGSPPSLASSSASQLSAPSLKATCTTHHDSPDVDLIEANLLWRQEMGGNITRVESENKVVILDSFDPLRAEEDEREPSVAAEILRKTKRFPPAMPIWARPDYNPPLLESWKDPDYVPPVVHGCPLPPTKAPPIPPPRRKRTVVLTESTVSSALAELATKTFGSSGSSAVDSGTATAPPDQASDDGDQGSDVESYSSMPPLEGEPGDPDLSDGSWSTVSEEAGEDVICCSMSYTWTGALITPCAAEESKLPINPLSNSLLRHHNMVYATTSRSAGLRQKKVTFDRLQVLDDHYRDVLKEMKAKASTVKAKLLSIEEACKLTPPHSARSKFGYGAKDVRNLSSKAVNHIRSVWKDLLEDTETPIDTTVMAKSEVFCVQPEKGGRKPARLIVFPDLGVRVCEKMALYDVVSTLPQAVMGSSYGFQYSPGQRVEFLVNAWKSKKCPMGFSYDTRCFDSTVTESDIRVEESIYQCCDLAPEARQAIKSLTERLYIGGPLTNSKGQNCGYRRCRASGVLTTSCGNTLTCYLKASAACRAAKLRDCTMLVNGDDLVVICESAGTQEDEANLRVFTEAMTRYSAPPGDPPRPEYDLELITSCSSNVSVAHDASGKRVYYLTRDPSTPLARAAWETARHTPVNSWLGNIIMYAPTLWARMILMTHFFSILLAQEQLEKALDCQIYGACYSIEPLDLPQIIERLHGLSAFSLHSYSPGEINRVASCLRKLGVPPLRVWRHRARSVRAKLLSQGGRAATCGKYLFNWAVRTKLKLTPIPAASQLDLSSWFVAGYSGGDIYHSLSRARPRWFMLCLLLLSVGVGIYLLPNR.

An N-acetylserine; by host modification is found at serine 2. The interval 2–23 (STNPKPQRKTKRNTNRRPQDVK) is interaction with STAT1. The interval 2–58 (STNPKPQRKTKRNTNRRPQDVKFPGGGQIVGGVYLLPRRGPRLGVRATRKTSERSQP) is interaction with EIF2AK2/PKR. An interaction with DDX3X region spans residues 2–59 (STNPKPQRKTKRNTNRRPQDVKFPGGGQIVGGVYLLPRRGPRLGVRATRKTSERSQPR). Positions 2–75 (STNPKPQRKT…PKARQPEGRA (74 aa)) are disordered. Over 2–168 (STNPKPQRKT…EDGVNYATGN (167 aa)) the chain is Cytoplasmic. 2 short sequence motifs (nuclear localization signal) span residues 5-13 (PKPQRKTKR) and 38-43 (PRRGPR). Basic residues predominate over residues 7-16 (PQRKTKRNTN). The span at 32 to 47 (GGVYLLPRRGPRLGVR) shows a compositional bias: low complexity. Serine 53 carries the phosphoserine; by host modification. 2 consecutive short sequence motifs (nuclear localization signal) follow at residues 58–64 (PRGRRQP) and 66–71 (PKARQP). Serine 99 is modified (phosphoserine; by host). Positions 112-152 (PRRRSRNLGKVIDTLTCGFADLMGYIPLVGAPLGGVARALA) are important for endoplasmic reticulum and mitochondrial localization. Residue serine 116 is modified to Phosphoserine; by host PKA. Residues 122-173 (VIDTLTCGFADLMGYIPLVGAPLGGVARALAHGVRVVEDGVNYATGNLPGCS) are interaction with APOA2. The segment at 164–167 (YATG) is important for lipid droplets localization. Residues 169-189 (LPGCSFSIFLLALLSCLTIPA) traverse the membrane as a helical segment. A propeptide spans 178–191 (LLALLSCLTIPASA) (ER anchor for the core protein, removed in mature form by host signal peptidase). Topologically, residues 190-358 (SAYEVRNVSG…AGAHWGVLAG (169 aa)) are lumenal. Residues asparagine 196, asparagine 209, asparagine 234, and asparagine 250 are each glycosylated (N-linked (GlcNAc...) asparagine; by host). Positions 265–296 (LVGAAAFCSAMYVGDLCGSVFLVSQLFTFSPR) are important for fusion. Residue asparagine 305 is glycosylated (N-linked (GlcNAc...) asparagine; by host). The chain crosses the membrane as a helical span at residues 359–379 (LAYYSMVGNWAKVLIVMLLFA). The Lumenal portion of the chain corresponds to 380–725 (GVDGETRVTG…WDYIVILFLL (346 aa)). Residues 385–411 (TRVTGGQIARNAYSLTTLFSSGSAQNI) are HVR1. Residues asparagine 417, asparagine 423, asparagine 430, and asparagine 448 are each glycosylated (N-linked (GlcNAc...) (high mannose) asparagine; by host). 4 disulfide bridges follow: cysteine 429–cysteine 552, cysteine 452–cysteine 459, cysteine 486–cysteine 494, and cysteine 503–cysteine 508. The HVR2 stretch occupies residues 474–479 (YAEQGG). The tract at residues 480–493 (QDQRPYCWHYAPKP) is CD81-binding 1. A glycan (N-linked (GlcNAc...) (high mannose) asparagine; by host) is linked at asparagine 532. An N-linked (GlcNAc...) asparagine; by host glycan is attached at asparagine 540. The tract at residues 544 to 551 (PPQGNWFG) is CD81-binding 2. A glycan (N-linked (GlcNAc...) (high mannose) asparagine; by host) is linked at asparagine 556. Cysteines 564 and 569 form a disulfide. An N-linked (GlcNAc...) (high mannose) asparagine; by host glycan is attached at asparagine 576. Cystine bridges form between cysteine 581–cysteine 585, cysteine 597–cysteine 620, and cysteine 607–cysteine 644. N-linked (GlcNAc...) (high mannose) asparagine; by host glycans are attached at residues asparagine 623 and asparagine 645. Cysteine 652 and cysteine 677 form a disulfide bridge. Residues 660 to 671 (LELSPLLLSTTE) form a PKR/eIF2-alpha phosphorylation homology domain (PePHD) region. The helical transmembrane segment at 726–746 (LADARVCACLWMMLLIAQAEA) threads the bilayer. Residues 747–757 (ALENLVVLNAA) are Lumenal-facing. Residues 758 to 778 (SVAGAHGILSFLVFFCAAWYI) form a helical membrane-spanning segment. At 779 to 781 (KGK) the chain is on the cytoplasmic side. Residues 782 to 803 (LVPGAAYAFYGVWPLLLLLLAL) form a helical membrane-spanning segment. Residues 804–813 (PPRAYAMERE) are Lumenal-facing. Residues 814–834 (MAASCGGAVFVGLVLLTLSPY) traverse the membrane as a helical segment. Over 835–838 (YKEF) the chain is Cytoplasmic. The helical transmembrane segment at 839-859 (LARLIWWLQYFITRAEAHLQV) threads the bilayer. Residues 860-881 (WIPPLNIRGGRDAIILLACVVH) are Lumenal-facing. Residues 882–902 (PELIFDITKLLLAILGPLMVL) traverse the membrane as a helical segment. One can recognise a Peptidase C18 domain in the interval 903–1026 (QASITQVPYF…SLEGQGWRLL (124 aa)). Residues 903–1657 (QASITQVPYF…CMSADLEVVT (755 aa)) lie on the Cytoplasmic side of the membrane. Residues 904 to 1206 (ASITQVPYFV…PVESMETTMR (303 aa)) are protease NS2-3. Residue cysteine 922 is the site of S-palmitoyl cysteine; by host attachment. Positions 929–949 (AGGHYVQMAFVKLTALTGTYV) are interaction with host SCPS1. Residues histidine 952, glutamate 972, and cysteine 993 each act as for protease NS2 activity; shared with dimeric partner in the active site. One can recognise a Peptidase S29 domain in the interval 1027–1208 (APITAYSQQT…ESMETTMRSP (182 aa)). Residues histidine 1083 and aspartate 1107 each act as charge relay system; for serine protease NS3 activity in the active site. Residues cysteine 1123 and cysteine 1125 each contribute to the Zn(2+) site. Serine 1165 serves as the catalytic Charge relay system; for serine protease NS3 activity. Zn(2+) is bound by residues cysteine 1171 and histidine 1175. Residues 1217 to 1369 (PAVPQTFQVA…PNIEEVALSN (153 aa)) enclose the Helicase ATP-binding domain. 1230 to 1237 (APTGSGKS) is an ATP binding site. Mg(2+)-binding residues include serine 1237 and glutamate 1317. Residues 1316-1319 (DECH) carry the DECH box motif. The segment at 1486–1497 (QRRGRTGRGRRG) is RNA-binding. A helical membrane pass occupies residues 1658-1678 (STWVLVGGVLAALAAYCLTTG). The interval 1679–1690 (SVVIVGRIILSG) is NS3-binding. Residues 1679 to 1805 (SVVIVGRIIL…SITSPLSTQN (127 aa)) are Cytoplasmic-facing. Residues 1806 to 1824 (TLLFNIWGGWVAAQLAPPS) form a helical membrane-spanning segment. At 1825-1828 (AASA) the chain is on the lumenal side. The chain crosses the membrane as a helical span at residues 1829 to 1849 (FVGAGIAGAAVGSIGLGKVLV). Aspartate 1850 is a topological domain (cytoplasmic). A helical membrane pass occupies residues 1851-1871 (ILAGYGAGVAGALVAFKIMSG). The Lumenal segment spans residues 1872-1881 (EVPSTEDLVN). Residues 1882 to 1902 (LLPAILSPGALVVGVVCAAIL) traverse the membrane as a helical segment. Residues 1903–1972 (RRHVGPGEGA…WINEDCSTPC (70 aa)) are Cytoplasmic-facing. Residues cysteine 1968 and cysteine 1972 are each lipidated (S-palmitoyl cysteine; by host). The stretch at 1973 to 2002 (SGSWLRDVWDWICTVLTDFKTWLQSKLLPR) is an intramembrane region. Topologically, residues 2003–2989 (LPGVPFFSCQ…YHSLSRARPR (987 aa)) are cytoplasmic. Positions 2011, 2029, 2031, and 2052 each coordinate Zn(2+). The segment at 2120–2208 (EFFTEVDGVR…ASSSASQLSA (89 aa)) is FKBP8-binding. The interval 2120 to 2332 (EFFTEVDGVR…PIPPPRRKRT (213 aa)) is transcriptional activation. Residues 2135–2139 (PACKP) form an interaction with non-structural protein 4A region. The interaction with host SKP2 stretch occupies residues 2189–2441 (RLARGSPPSL…PCAAEESKLP (253 aa)). Serine 2194 carries the post-translational modification Phosphoserine; by host; in p56. Residues serine 2197, serine 2201, serine 2204, serine 2207, and serine 2210 each carry the phosphoserine; by host; in p58 modification. An ISDR region spans residues 2210–2249 (SLKATCTTHHDSPDVDLIEANLLWRQEMGGNITRVESENK). The interaction with EIF2AK2/PKR stretch occupies residues 2210 to 2275 (SLKATCTTHH…REPSVAAEIL (66 aa)). The NS4B-binding stretch occupies residues 2249–2306 (KVVILDSFDPLRAEEDEREPSVAAEILRKTKRFPPAMPIWARPDYNPPLLESWKDPDY). Positions 2322 to 2325 (PPIP) match the SH3-binding motif. The short motif at 2326-2334 (PPRRKRTVV) is the Nuclear localization signal element. Lysine 2350 is covalently cross-linked (Glycyl lysine isopeptide (Lys-Gly) (interchain with G-Cter in ubiquitin)). The segment covering 2351-2365 (TFGSSGSSAVDSGTA) has biased composition (polar residues). The tract at residues 2351 to 2407 (TFGSSGSSAVDSGTATAPPDQASDDGDQGSDVESYSSMPPLEGEPGDPDLSDGSWST) is disordered. Positions 2354 to 2377 (SSGSSAVDSGTATAPPDQASDDGD) are V3. A phosphoserine; by host mark is found at serine 2448 and serine 2461. The RdRp catalytic domain maps to 2633–2751 (PMGFSYDTRC…ICESAGTQED (119 aa)). The Mg(2+) site is built by aspartate 2639, aspartate 2737, and aspartate 2738. A helical transmembrane segment spans residues 2990 to 3010 (WFMLCLLLLSVGVGIYLLPNR).

Belongs to the hepacivirus polyprotein family. In terms of assembly, homooligomer. Interacts with E1 (via C-terminus). Interacts with the non-structural protein 5A. Interacts (via N-terminus) with host STAT1 (via SH2 domain); this interaction results in decreased STAT1 phosphorylation and ubiquitin-mediated proteasome-dependent STAT1 degradation, leading to decreased IFN-stimulated gene transcription. Interacts with host STAT3; this interaction constitutively activates STAT3. Interacts with host LTBR receptor. Interacts with host TNFRSF1A receptor and possibly induces apoptosis. Interacts with host HNRPK. Interacts with host YWHAE. Interacts with host UBE3A/E6AP. Interacts with host DDX3X. Interacts with host APOA2. Interacts with host RXRA protein. Interacts with host SP110 isoform 3/Sp110b; this interaction sequesters the transcriptional corepressor SP110 away from the nucleus. Interacts with host CREB3 nuclear transcription protein; this interaction triggers cell transformation. Interacts with host ACY3. Interacts with host C1QR1. Interacts with host RBM24; this interaction, which enhances the interaction of the mature core protein with 5'-UTR, may inhibit viral translation and favor replication. Interacts with host EIF2AK2/PKR; this interaction induces the autophosphorylation of EIF2AK2. Part of the viral assembly initiation complex composed of NS2, E1, E2, NS3, NS4A, NS5A and the mature core protein. Forms a heterodimer with envelope glycoprotein E2. Interacts with mature core protein. Interacts with protease NS2. The heterodimer E1/E2 interacts with host CLDN1; this interaction plays a role in viral entry into host cell. Interacts with host SPSB2 (via C-terminus). Part of the viral assembly initiation complex composed of NS2, E1, E2, NS3, NS4A, NS5A and the mature core protein. Interacts with host NEURL3; this interaction prevents E1 binding to glycoprotein E2. As to quaternary structure, forms a heterodimer with envelope glycoprotein E1. Interacts with host CD81 and SCARB1 receptors; these interactions play a role in viral entry into host cell. Interacts with host EIF2AK2/PKR; this interaction inhibits EIF2AK2 and probably allows the virus to evade the innate immune response. Interacts with host CD209/DC-SIGN and CLEC4M/DC-SIGNR. Interact with host SPCS1; this interaction is essential for viral particle assembly. Interacts with protease NS2. The heterodimer E1/E2 interacts with host CLDN1; this interaction plays a role in viral entry into host cell. Part of the viral assembly initiation complex composed of NS2, E1, E2, NS3, NS4A, NS5A and the mature core protein. Interacts with host SLC3A2/4F2hc; the interaction may facilitate viral entry into host cell. Interacts with human PLSCR1. In terms of assembly, homohexamer. Homoheptamer. Interacts with protease NS2. Homodimer. Interacts with host SPCS1; this interaction is essential for viral particle assembly. Interacts with envelope glycoprotein E1. Interacts with envelope glycoprotein E2. Interacts with viroporin p7. Interacts with serine protease/helicase NS3. Part of the replication complex composed of NS2, NS3, NS4A, NS4B, NS5A and the RNA-directed RNA polymerase embedded in an ER-derived membranous web. Part of the viral assembly initiation complex composed of NS2, E1, E2, NS3, NS4A, NS5A and the mature core protein. As to quaternary structure, interacts with protease NS2. Interacts with non-structural protein 4A; this interaction stabilizes the folding of NS3 serine protease. NS3-NS4A interaction is essential for NS3 activation and allows membrane anchorage of the latter. NS3/NS4A complex also prevents phosphorylation of host IRF3, thus preventing the establishment of dsRNA induced antiviral state. Interacts with host MAVS; this interaction leads to the cleavage and inhibition of host MAVS. Interacts with host TICAM1; this interaction leads to the cleavage and inhibition of host TICAM1. Interacts with host TANK-binding kinase/TBK1; this interaction results in the inhibition of the association between TBK1 and IRF3, which leads to the inhibition of IRF3 activation. Interacts with host RBM24. Part of the replication complex composed of NS2, NS3, NS4A, NS4B, NS5A and the RNA-directed RNA polymerase embedded in an ER-derived membranous web. Part of the viral assembly initiation complex composed of NS2, E1, E2, NS3, NS4A, NS5A and the mature core protein. In terms of assembly, interacts with NS3 serine protease; this interaction stabilizes the folding of NS3 serine protease. NS3-NS4A interaction is essential for NS3 activation and allows membrane anchorage of the latter. Interacts with non-structural protein 5A (via N-terminus). Part of the replication complex composed of NS2, NS3, NS4A, NS4B, NS5A and the RNA-directed RNA polymerase embedded in an ER-derived membranous web. Part of the viral assembly initiation complex composed of NS2, E1, E2, NS3, NS4A, NS5A and the mature core protein. Homomultimer. Interacts with non-structural protein NS5A. Interacts with host PLA2G4C; this interaction likely initiates the recruitment of replication complexes to lipid droplets. Interacts with host STING; this interaction disrupts the interaction between STING and TBK1 thereby suppressing the interferon signaling. Part of the replication complex composed of NS2, NS3, NS4A, NS4B, NS5A and the RNA-directed RNA polymerase embedded in an ER-derived membranous web. As to quaternary structure, monomer. Homodimer; dimerization is required for RNA-binding. Interacts with the mature core protein. Interacts (via N-terminus) with non-structural protein 4A. Interacts with non-structural protein 4B. Interacts (via region D2) with RNA-directed RNA polymerase. Part of the viral assembly initiation complex composed of NS2, E1, E2, NS3, NS4A, NS5A and the mature core protein. Part of the replication complex composed of NS2, NS3, NS4A, NS4B, NS5A and the RNA-directed RNA polymerase embedded in an ER-derived membranous web. Interacts with host GRB2. Interacts with host BIN1. Interacts with host PIK3R1. Interacts with host SRCAP. Interacts with host FKBP8. Interacts (via C-terminus) with host VAPB (via MSP domain). Interacts with host EIF2AK2/PKR; this interaction leads to disruption of EIF2AK2 dimerization by NS5A and probably allows the virus to evade the innate immune response. Interacts (via N-terminus) with host PACSIN2 (via N-terminus); this interaction attenuates protein kinase C alpha-mediated phosphorylation of PACSIN2 by disrupting the interaction between PACSIN2 and PRKCA. Interacts (via N-terminus) with host SRC kinase (via SH2 domain). Interacts with most Src-family kinases. Interacts with host IFI27 and SKP2; promotes the ubiquitin-mediated proteasomal degradation of NS5A. Interacts with host GPS2. Interacts with host TNFRSF21; this interaction allows the modulation by the virus of JNK, p38 MAPK, STAT3, and Akt signaling pathways in a DR6-dependent manner. Interacts (via N-terminus) with host CIDEB (via N-terminus); this interaction seems to regulate the association of HCV particles with APOE. Interacts with host CHKA/Choline Kinase-alpha; CHKA bridges host PI4KA and NS5A and potentiates NS5A-stimulated PI4KA activity, which then facilitates the targeting of the ternary complex to the ER for viral replication. Interacts with host SPSB2 (via C-terminus); this interaction targets NS5A for ubiquitination and degradation. Interacts with host RAB18; this interaction may promote the association of NS5A and other replicase components with lipid droplets. Interacts (via region D2) with host PPIA/CYPA; the interaction stimulates RNA-binding ability of NS5A and is dependent on the peptidyl-prolyl cis-trans isomerase activity of PPIA/CYPA. Interacts with host TRIM14; this interaction induces the degradation of NS5A. In terms of assembly, homooligomer. Interacts with non-structural protein 5A. Interacts with host VAPB. Interacts with host PRK2/PKN2. Interacts with host HNRNPA1 and SEPT6; these interactions facilitate viral replication. Part of the replication complex composed of NS2, NS3, NS4A, NS4B, NS5A and the RNA-directed RNA polymerase. Requires Zn(2+) as cofactor. Mg(2+) serves as cofactor. In terms of processing, specific enzymatic cleavages in vivo yield mature proteins. The structural proteins, core, E1, E2 and p7 are produced by proteolytic processing by host signal peptidases. The core protein precursor is synthesized as a 23 kDa, which is retained in the ER membrane through the hydrophobic signal peptide. Cleavage by the signal peptidase releases the 21 kDa mature core protein. The cleavage of the core protein precursor occurs between aminoacids 176 and 188 but the exact cleavage site is not known. Some degraded forms of the core protein appear as well during the course of infection. The other proteins (p7, NS2, NS3, NS4A, NS4B, NS5A and NS5B) are cleaved by the viral proteases. Autoprocessing between NS2 and NS3 is mediated by the NS2 cysteine protease catalytic domain and regulated by the NS3 N-terminal domain. Phosphorylated by host PKC and PKA. Post-translationally, ubiquitinated; mediated by UBE3A and leading to core protein subsequent proteasomal degradation. In terms of processing, highly N-glycosylated. Palmitoylation is required for NS2/3 autoprocessing and E2 recruitment to membranes. Post-translationally, palmitoylated. This modification may play a role in its polymerization or in protein-protein interactions. In terms of processing, phosphorylated on serines in a basal form termed p56. p58 is a hyperphosphorylated form of p56. p56 and p58 coexist in the cell in roughly equivalent amounts. Hyperphosphorylation is dependent on the presence of NS4A. Host CSNK1A1/CKI-alpha or RPS6KB1 kinases may be responsible for NS5A phosphorylation. Tyrosine phosphorylation is essential for the interaction with host SRC. Post-translationally, ubiquitinated. Ubiquitination, most probably at Lys-2350, mediated by host IFI27 and SKP2 leads to proteasomal degradation, restricting viral infection. Ubiquitination by host TRIM22 leads to interruption of viral replication. In terms of processing, the N-terminus is phosphorylated by host PRK2/PKN2.

The protein resides in the host endoplasmic reticulum membrane. Its subcellular location is the host mitochondrion membrane. It is found in the virion. The protein localises to the host cytoplasm. It localises to the host nucleus. The protein resides in the host lipid droplet. Its subcellular location is the virion membrane. It is found in the host mitochondrion. The protein localises to the host cell membrane. It localises to the host perinuclear region. The catalysed reaction is Hydrolysis of four peptide bonds in the viral precursor polyprotein, commonly with Asp or Glu in the P6 position, Cys or Thr in P1 and Ser or Ala in P1'.. The enzyme catalyses a ribonucleoside 5'-triphosphate + H2O = a ribonucleoside 5'-diphosphate + phosphate + H(+). It carries out the reaction ATP + H2O = ADP + phosphate + H(+). It catalyses the reaction RNA(n) + a ribonucleoside 5'-triphosphate = RNA(n+1) + diphosphate. With respect to regulation, inhibited by the antiviral drug hexamethylene amiloride. Inhibition by amantadine appears to be genotype-dependent. Also inhibited by long-alkyl-chain iminosugar derivatives. Activity is up-regulated by PRK2/PKN2-mediated phosphorylation. Its function is as follows. Packages viral RNA to form a viral nucleocapsid, and promotes virion budding. Participates in the viral particle production as a result of its interaction with the non-structural protein 5A. Binds RNA and may function as a RNA chaperone to induce the RNA structural rearrangements taking place during virus replication. Modulates viral translation initiation by interacting with viral IRES and 40S ribosomal subunit. Affects various cell signaling pathways, host immunity and lipid metabolism. Prevents the establishment of cellular antiviral state by blocking the interferon-alpha/beta (IFN-alpha/beta) and IFN-gamma signaling pathways and by blocking the formation of phosphorylated STAT1 and promoting ubiquitin-mediated proteasome-dependent degradation of STAT1. Activates STAT3 leading to cellular transformation. Regulates the activity of cellular genes, including c-myc and c-fos. May repress the promoter of p53, and sequester CREB3 and SP110 isoform 3/Sp110b in the cytoplasm. Represses cell cycle negative regulating factor CDKN1A, thereby interrupting an important check point of normal cell cycle regulation. Targets transcription factors involved in the regulation of inflammatory responses and in the immune response: suppresses TNF-induced NF-kappa-B activation, and activates AP-1. Binds to dendritic cells (DCs) via C1QR1, resulting in down-regulation of T-lymphocytes proliferation. Alters lipid metabolism by interacting with hepatocellular proteins involved in lipid accumulation and storage. Induces up-regulation of FAS promoter activity, and thereby contributes to the increased triglyceride accumulation in hepatocytes (steatosis). Forms a heterodimer with envelope glycoprotein E2, which mediates virus attachment to the host cell, virion internalization through clathrin-dependent endocytosis and fusion with host membrane. Fusion with the host cell is most likely mediated by both E1 and E2, through conformational rearrangements of the heterodimer required for fusion rather than a classical class II fusion mechanism. E1/E2 heterodimer binds host apolipoproteins such as APOB and APOE thereby forming a lipo-viro-particle (LVP). APOE associated to the LVP allows the initial virus attachment to cell surface receptors such as the heparan sulfate proteoglycans (HSPGs), syndecan-1 (SDC1), syndecan-1 (SDC2), the low-density lipoprotein receptor (LDLR) and scavenger receptor class B type I (SCARB1). The cholesterol transfer activity of SCARB1 allows E2 exposure and binding of E2 to SCARB1 and the tetraspanin CD81. E1/E2 heterodimer binding on CD81 activates the epithelial growth factor receptor (EGFR) signaling pathway. Diffusion of the complex E1-E2-EGFR-SCARB1-CD81 to the cell lateral membrane allows further interaction with Claudin 1 (CLDN1) and occludin (OCLN) to finally trigger HCV entry. Functionally, forms a heterodimer with envelope glycoprotein E1, which mediates virus attachment to the host cell, virion internalization through clathrin-dependent endocytosis and fusion with host membrane. Fusion with the host cell is most likely mediated by both E1 and E2, through conformational rearrangements of the heterodimer required for fusion rather than a classical class II fusion mechanism. The interaction between envelope glycoprotein E2 and host apolipoprotein E/APOE allows the proper assembly, maturation and infectivity of the viral particles. This interaction is probably promoted via the up-regulation of cellular autophagy by the virus. E1/E2 heterodimer binds host apolipoproteins such as APOB and APOE thereby forming a lipo-viro-particle (LVP). APOE associated to the LVP allows the initial virus attachment to cell surface receptors such as the heparan sulfate proteoglycans (HSPGs), syndecan-1 (SDC1), syndecan-1 (SDC2), the low-density lipoprotein receptor (LDLR) and scavenger receptor class B type I (SCARB1). The cholesterol transfer activity of SCARB1 allows E2 exposure and binding of E2 to SCARB1 and the tetraspanin CD81. E1/E2 heterodimer binding on CD81 activates the epithelial growth factor receptor (EGFR) signaling pathway. Diffusion of the complex E1-E2-EGFR-SCARB1-CD81 to the cell lateral membrane allows further interaction with Claudin 1 (CLDN1) and occludin (OCLN) to finally trigger HCV entry. Inhibits host EIF2AK2/PKR activation, preventing the establishment of an antiviral state. Viral ligand for CD209/DC-SIGN and CLEC4M/DC-SIGNR, which are respectively found on dendritic cells (DCs), and on liver sinusoidal endothelial cells and macrophage-like cells of lymph node sinuses. These interactions allow the capture of circulating HCV particles by these cells and subsequent facilitated transmission to permissive cells such as hepatocytes and lymphocyte subpopulations. The interaction between E2 and host amino acid transporter complex formed by SLC3A2 and SLC7A5/LAT1 may facilitate viral entry into host cell. In terms of biological role, ion channel protein that acts as a viroporin and plays an essential role in the assembly, envelopment and secretion of viral particles. Regulates the host cell secretory pathway, which induces the intracellular retention of viral glycoproteins and favors assembly of viral particles. Creates a pore in acidic organelles and releases Ca(2+) and H(+) in the cytoplasm of infected cells, leading to a productive viral infection. High levels of cytoplasmic Ca(2+) may trigger membrane trafficking and transport of viral ER-associated proteins to viroplasms, sites of viral genome replication. This ionic imbalance induces the assembly of the inflammasome complex, which triggers the maturation of pro-IL-1beta into IL-1beta through the action of caspase-1. Targets also host mitochondria and induces mitochondrial depolarization. In addition of its role as a viroporin, acts as a lipid raft adhesion factor. Its function is as follows. Cysteine protease required for the proteolytic auto-cleavage between the non-structural proteins NS2 and NS3. The N-terminus of NS3 is required for the function of NS2 protease (active region NS2-3). Promotes the initiation of viral particle assembly by mediating the interaction between structural and non-structural proteins. Displays three enzymatic activities: serine protease with a chymotrypsin-like fold, NTPase and RNA helicase. NS3 serine protease, in association with NS4A, is responsible for the cleavages of NS3-NS4A, NS4A-NS4B, NS4B-NS5A and NS5A-NS5B. The NS3/NS4A complex prevents phosphorylation of host IRF3, thus preventing the establishment of dsRNA induced antiviral state. The NS3/NS4A complex induces host amino acid transporter component SLC3A2, thus contributing to HCV propagation. NS3 RNA helicase binds to RNA and unwinds both dsDNA and dsRNA in the 3' to 5' direction, and likely resolves RNA complicated stable secondary structures in the template strand. Binds a single ATP and catalyzes the unzipping of a single base pair of dsRNA. Inhibits host antiviral proteins TBK1 and IRF3 thereby preventing the establishment of an antiviral state. Cleaves host MAVS/CARDIF thereby preventing the establishment of an antiviral state. Cleaves host TICAM1/TRIF, thereby disrupting TLR3 signaling and preventing the establishment of an antiviral state. Functionally, peptide cofactor which forms a non-covalent complex with the N-terminal of NS3 serine protease. The NS3/NS4A complex prevents phosphorylation of host IRF3, thus preventing the establishment of dsRNA induced antiviral state. The NS3/NS4A complex induces host amino acid transporter component SLC3A2, thus contributing to HCV propagation. In terms of biological role, induces a specific membrane alteration that serves as a scaffold for the virus replication complex. This membrane alteration gives rise to the so-called ER-derived membranous web that contains the replication complex. NS4B self-interaction contributes to its function in membranous web formation. Promotes host TRIF protein degradation in a CASP8-dependent manner thereby inhibiting host TLR3-mediated interferon signaling. Disrupts the interaction between STING and TBK1 contributing to the inhibition of interferon signaling. Its function is as follows. Phosphorylated protein that is indispensable for viral replication and assembly. Both hypo- and hyperphosphorylated states are required for the viral life cycle. The hyperphosphorylated form of NS5A is an inhibitor of viral replication. Involved in RNA-binding and especially in binding to the viral genome. Zinc is essential for RNA-binding. Participates in the viral particle production as a result of its interaction with the mature viral core protein. Its interaction with host VAPB may target the viral replication complex to vesicles. Down-regulates viral IRES translation initiation. Mediates interferon resistance, presumably by interacting with and inhibiting host EIF2AK2/PKR. Prevents BIN1-induced apoptosis. Acts as a transcriptional activator of some host genes important for viral replication when localized in the nucleus. Via the interaction with host PACSIN2, modulates lipid droplet formation in order to promote virion assembly. Modulates TNFRSF21/DR6 signaling pathway for viral propagation. RNA-dependent RNA polymerase that performs primer-template recognition and RNA synthesis during viral replication. Initiates RNA transcription/replication at a flavin adenine dinucleotide (FAD), resulting in a 5'- FAD cap on viral RNAs. In this way, recognition of viral 5' RNA by host pattern recognition receptors can be bypassed, thereby evading activation of antiviral pathways. The protein is Genome polyprotein of Homo sapiens (Human).